The sequence spans 214 residues: MLDREGFRPNVGIILLNARNEVFWGKRLREHSWQFPQGGIKYGETPMQAMYRELHEETGLHPEHVKIIGRTRDWLRYEVPDKFIKREVRGHYRGQKQIWFLLRMVGRDCDICLRATDHPEFDAWRWNEYWVPLDAVIEFKRDVYQLALTELSRFLRRPAQRAEKPRGPRMSRYPRVIGAQAQTLTIVDTSVVCSEIEVEASTLDEMPPHVIVGK.

The Nudix hydrolase domain occupies 6–149; that stretch reads GFRPNVGIIL…KRDVYQLALT (144 aa). Residues 38-59 carry the Nudix box motif; that stretch reads GGIKYGETPMQAMYRELHEETG.

The protein belongs to the Nudix hydrolase family. RppH subfamily. A divalent metal cation is required as a cofactor.

Functionally, accelerates the degradation of transcripts by removing pyrophosphate from the 5'-end of triphosphorylated RNA, leading to a more labile monophosphorylated state that can stimulate subsequent ribonuclease cleavage. The chain is RNA pyrophosphohydrolase from Burkholderia orbicola (strain MC0-3).